We begin with the raw amino-acid sequence, 448 residues long: Beta-alanine--pyruvate aminotransferase (448 aa).

Trp61 is a binding site for substrate. Pyridoxal 5'-phosphate is bound at residue 120 to 121 (GS). Lys288 carries the post-translational modification N6-(pyridoxal phosphate)lysine. Thr327 contacts pyridoxal 5'-phosphate. Substrate contacts are provided by Arg414 and Gln421.

The protein belongs to the class-III pyridoxal-phosphate-dependent aminotransferase family. In terms of assembly, homotetramer. It depends on pyridoxal 5'-phosphate as a cofactor.

It carries out the reaction 3-oxopropanoate + L-alanine = beta-alanine + pyruvate. Inhibited by gabaculine (5-amino-1,3-cyclohexadienylcarboxylic acid). Its function is as follows. Involved in the degradation of beta-alanine. Catalyzes the transfer of the amino group from beta-alanine to pyruvate to yield L-alanine and 3-oxopropanoate. It can also accept both 4-aminobutyrate and (S)-alpha-methylbenzylamine (MBA) as amino-group donors in the presence of pyruvate as an amine acceptor. The chain is Beta-alanine--pyruvate aminotransferase (bauA) from Pseudomonas aeruginosa (strain ATCC 15692 / DSM 22644 / CIP 104116 / JCM 14847 / LMG 12228 / 1C / PRS 101 / PAO1).